Here is a 209-residue protein sequence, read N- to C-terminus: Uridine kinase (209 aa).

12–19 (GGSASGKT) provides a ligand contact to ATP.

It belongs to the uridine kinase family.

The protein localises to the cytoplasm. It catalyses the reaction uridine + ATP = UMP + ADP + H(+). It carries out the reaction cytidine + ATP = CMP + ADP + H(+). Its pathway is pyrimidine metabolism; CTP biosynthesis via salvage pathway; CTP from cytidine: step 1/3. It participates in pyrimidine metabolism; UMP biosynthesis via salvage pathway; UMP from uridine: step 1/1. This chain is Uridine kinase, found in Chloroflexus aggregans (strain MD-66 / DSM 9485).